A 90-amino-acid polypeptide reads, in one-letter code: Small ribosomal subunit protein uS15 (90 aa).

It belongs to the universal ribosomal protein uS15 family. In terms of assembly, part of the 30S ribosomal subunit. Forms a bridge to the 50S subunit in the 70S ribosome, contacting the 23S rRNA.

Its function is as follows. One of the primary rRNA binding proteins, it binds directly to 16S rRNA where it helps nucleate assembly of the platform of the 30S subunit by binding and bridging several RNA helices of the 16S rRNA. Functionally, forms an intersubunit bridge (bridge B4) with the 23S rRNA of the 50S subunit in the ribosome. In Campylobacter jejuni subsp. doylei (strain ATCC BAA-1458 / RM4099 / 269.97), this protein is Small ribosomal subunit protein uS15.